The chain runs to 531 residues: Apolipoprotein N-acyltransferase (531 aa).

Helical transmembrane passes span 8–28 (IILL…LLAV), 34–54 (FGIF…IDGV), 69–89 (PAAI…WWLG), 105–125 (LTVV…VVIA), 136–156 (IAAL…LFTG), 178–198 (VVNL…PALI), and 206–226 (AGLA…FYRL). One can recognise a CN hydrolase domain in the interval 243 to 493 (VQPVIDQAKK…RGVIDTILPG (251 aa)). Residue E287 is the Proton acceptor of the active site. Residue K351 is part of the active site. The Nucleophile role is filled by C405. Residues 507–527 (IFWLTTGILFLVAAISRLGFN) traverse the membrane as a helical segment.

The protein belongs to the CN hydrolase family. Apolipoprotein N-acyltransferase subfamily.

It is found in the cell inner membrane. The catalysed reaction is N-terminal S-1,2-diacyl-sn-glyceryl-L-cysteinyl-[lipoprotein] + a glycerophospholipid = N-acyl-S-1,2-diacyl-sn-glyceryl-L-cysteinyl-[lipoprotein] + a 2-acyl-sn-glycero-3-phospholipid + H(+). Its pathway is protein modification; lipoprotein biosynthesis (N-acyl transfer). In terms of biological role, catalyzes the phospholipid dependent N-acylation of the N-terminal cysteine of apolipoprotein, the last step in lipoprotein maturation. The sequence is that of Apolipoprotein N-acyltransferase from Rhizobium meliloti (strain 1021) (Ensifer meliloti).